The sequence spans 442 residues: tRNA(Ile)-lysidine synthase (442 aa).

Position 27–32 (27–32) interacts with ATP; the sequence is SGGLDS.

Belongs to the tRNA(Ile)-lysidine synthase family.

The protein localises to the cytoplasm. It catalyses the reaction cytidine(34) in tRNA(Ile2) + L-lysine + ATP = lysidine(34) in tRNA(Ile2) + AMP + diphosphate + H(+). Functionally, ligates lysine onto the cytidine present at position 34 of the AUA codon-specific tRNA(Ile) that contains the anticodon CAU, in an ATP-dependent manner. Cytidine is converted to lysidine, thus changing the amino acid specificity of the tRNA from methionine to isoleucine. This Photorhabdus laumondii subsp. laumondii (strain DSM 15139 / CIP 105565 / TT01) (Photorhabdus luminescens subsp. laumondii) protein is tRNA(Ile)-lysidine synthase.